Consider the following 157-residue polypeptide: Protein Smg homolog (157 aa).

This sequence belongs to the Smg family.

This is Protein Smg homolog from Pseudoalteromonas translucida (strain TAC 125).